The chain runs to 215 residues: MLTVALPKGALLKESIRLFQAIGLDFSGFLDPANRQLQIVAPTGNAQALLVRTQDVPVYVEYGQAQLGIVGYDVLREKNPQVAHLLDLQFGRCRLSVAVKQASPYRCSLDLPPHSRVASKFVHCARAYFEQMDLPVEVVPLYGSVELGPLTGMSEAIVDLVSTGRTLKENGLVELEVLFESTARLIAHPLSYRLNRFGLHQPIEQIQALLSSPVP.

Belongs to the ATP phosphoribosyltransferase family. Short subfamily. In terms of assembly, heteromultimer composed of HisG and HisZ subunits.

It is found in the cytoplasm. It catalyses the reaction 1-(5-phospho-beta-D-ribosyl)-ATP + diphosphate = 5-phospho-alpha-D-ribose 1-diphosphate + ATP. It functions in the pathway amino-acid biosynthesis; L-histidine biosynthesis; L-histidine from 5-phospho-alpha-D-ribose 1-diphosphate: step 1/9. Functionally, catalyzes the condensation of ATP and 5-phosphoribose 1-diphosphate to form N'-(5'-phosphoribosyl)-ATP (PR-ATP). Has a crucial role in the pathway because the rate of histidine biosynthesis seems to be controlled primarily by regulation of HisG enzymatic activity. The sequence is that of ATP phosphoribosyltransferase from Cyanothece sp. (strain PCC 7425 / ATCC 29141).